A 482-amino-acid polypeptide reads, in one-letter code: Signal recognition particle protein (482 aa).

GTP contacts are provided by residues 107 to 114, 189 to 193, and 247 to 250; these read GLQGTGKT, DTAGR, and TKLD. Disordered regions lie at residues 380 to 413 and 452 to 482; these read MTTE…TDVS and FGGQ…FGQL. Positions 452–468 are enriched in gly residues; sequence FGGQPGPGFRGYRGGGG. Residues 469–482 are compositionally biased toward basic residues; it reads KPKKKKKKKGFGQL.

Belongs to the GTP-binding SRP family. SRP54 subfamily. As to quaternary structure, part of the signal recognition particle protein translocation system, which is composed of SRP and FtsY.

The protein localises to the cytoplasm. It catalyses the reaction GTP + H2O = GDP + phosphate + H(+). Its function is as follows. Involved in targeting and insertion of nascent membrane proteins into the cytoplasmic membrane. Binds to the hydrophobic signal sequence of the ribosome-nascent chain (RNC) as it emerges from the ribosomes. The SRP-RNC complex is then targeted to the cytoplasmic membrane where it interacts with the SRP receptor FtsY. The chain is Signal recognition particle protein from Synechocystis sp. (strain ATCC 27184 / PCC 6803 / Kazusa).